We begin with the raw amino-acid sequence, 406 residues long: Phosphopentomutase (406 aa).

Mn(2+) contacts are provided by Asp10, Asp305, His310, Asp346, His347, and His358.

It belongs to the phosphopentomutase family. Mn(2+) serves as cofactor.

It is found in the cytoplasm. It catalyses the reaction 2-deoxy-alpha-D-ribose 1-phosphate = 2-deoxy-D-ribose 5-phosphate. It carries out the reaction alpha-D-ribose 1-phosphate = D-ribose 5-phosphate. The protein operates within carbohydrate degradation; 2-deoxy-D-ribose 1-phosphate degradation; D-glyceraldehyde 3-phosphate and acetaldehyde from 2-deoxy-alpha-D-ribose 1-phosphate: step 1/2. In terms of biological role, isomerase that catalyzes the conversion of deoxy-ribose 1-phosphate (dRib-1-P) and ribose 1-phosphate (Rib-1-P) to deoxy-ribose 5-phosphate (dRib-5-P) and ribose 5-phosphate (Rib-5-P), respectively. The protein is Phosphopentomutase of Rhizobium johnstonii (strain DSM 114642 / LMG 32736 / 3841) (Rhizobium leguminosarum bv. viciae).